Consider the following 252-residue polypeptide: ATP synthase subunit a (252 aa).

5 helical membrane passes run 33-53, 92-112, 130-150, 196-216, and 217-237; these read GQVF…ALAA, VPFV…GALV, DINT…YAGL, LVVG…VMAL, and GLFT…TYIG.

The protein belongs to the ATPase A chain family. F-type ATPases have 2 components, CF(1) - the catalytic core - and CF(0) - the membrane proton channel. CF(1) has five subunits: alpha(3), beta(3), gamma(1), delta(1), epsilon(1). CF(0) has three main subunits: a(1), b(2) and c(9-12). The alpha and beta chains form an alternating ring which encloses part of the gamma chain. CF(1) is attached to CF(0) by a central stalk formed by the gamma and epsilon chains, while a peripheral stalk is formed by the delta and b chains.

Its subcellular location is the cellular thylakoid membrane. Its function is as follows. Key component of the proton channel; it plays a direct role in the translocation of protons across the membrane. This Synechococcus sp. (strain PCC 6716) protein is ATP synthase subunit a.